The following is a 412-amino-acid chain: Polyferredoxin protein MvhB (412 aa).

4Fe-4S ferredoxin-type domains are found at residues 1–29, 30–57, 67–96, 97–127, 138–166, 168–197, 207–236, 238–266, 276–305, 314–345, 357–386, and 385–412; these read MIVVNKEDCIRCGACQGTCPTAAIEVTPE, DVIYCDICGGEPKCVDACPTGALKIEDL, GRIVFNPDKCNECGDCVEVCPPQILKLDEG, KVKKIPLQGFCVMCQKCVDICPVGVIGVEGI, EGPIFIADCVGCGMCVPECPVDAITLEKV, GVIEIDEDTCIKCGVCAQTCPWNAVYISGK, RKFELDEEACIGCNTCVEACPGDFIVPKSS, LTVELPAICTACGLCEQLCPVDAIDLDVE, EGLVWDEGKCDFIGACANICPNDAIRVVTR, EKVDEEPSFAMCTRCGACTMACPKGALSLVDM, KRVQYNPALCDQCGDCIEACPYDMLKLTDE, and DEKVPLKGFCILCDQCIPACPKGALSLK. [4Fe-4S] cluster-binding residues include Cys9, Cys12, Cys15, and Cys19. Residues Cys76, Cys79, Cys82, Cys86, Cys107, Cys110, Cys113, Cys117, Cys146, Cys149, Cys152, Cys156, Cys177, Cys180, Cys183, Cys187, Cys216, Cys219, Cys222, Cys226, Cys246, Cys249, Cys252, and Cys256 each contribute to the [4Fe-4S] cluster site. [4Fe-4S] cluster contacts are provided by Cys325, Cys328, Cys331, Cys335, Cys366, Cys369, Cys372, Cys376, Cys394, Cys397, Cys400, and Cys404.

Requires [4Fe-4S] cluster as cofactor.

The protein is Polyferredoxin protein MvhB (mvhB) of Methanothermobacter marburgensis (strain ATCC BAA-927 / DSM 2133 / JCM 14651 / NBRC 100331 / OCM 82 / Marburg) (Methanobacterium thermoautotrophicum).